The chain runs to 732 residues: Asp/Glu-specific dipeptidyl-peptidase (732 aa).

Residues 1 to 18 (MRIALVATLVLTSGIANA) form the signal peptide. Active-site charge relay system residues include histidine 80, aspartate 215, and serine 666.

This sequence belongs to the peptidase S46 family.

Functionally, catalyzes the removal of dipeptides from the N-terminus of oligopeptides. Shows a strict specificity for acidic residues (Asp or Glu) in the P1 position, and has probably a hydrophobic residue preference at the P2 position. Preferentially cleaves the synthetic substrate Leu-Glu-methylcoumaryl-7-amide (Leu-Glu-MCA) as compared to Leu-Asp-MCA. In Shewanella putrefaciens (strain CN-32 / ATCC BAA-453), this protein is Asp/Glu-specific dipeptidyl-peptidase (dpp11).